We begin with the raw amino-acid sequence, 147 residues long: Allograft inflammatory factor 1 (147 aa).

Ser-2 carries the post-translational modification N-acetylserine. Lys-11 carries the post-translational modification N6-acetyllysine. Position 39 is a phosphoserine (Ser-39). Residues 45–80 (SKLEAFKKKYMEFDLNEDGGIDIMSLKRMMEKLGVP) enclose the EF-hand 1 domain. The Ca(2+) site is built by Asp-58, Asn-60, and Asp-62. One can recognise an EF-hand 2; degenerate domain in the interval 81–115 (KTHLELKKLIMEVSSGPGETFSYSDFLKMMLGKRS). Positions 128-147 (AREQEKPTGLPAKKAISELP) are disordered.

Phosphorylated on serine residues.

The protein resides in the cytoplasm. Its subcellular location is the cytoskeleton. The protein localises to the cell projection. It localises to the ruffle membrane. It is found in the phagocytic cup. Functionally, may play a role in macrophage activation and function. This is Allograft inflammatory factor 1 (AIF1) from Bos taurus (Bovine).